A 472-amino-acid polypeptide reads, in one-letter code: Siroheme synthase 2 (472 aa).

Residues 1–204 (MDYFPIFCQL…EDQVQVEQHV (204 aa)) form a precorrin-2 dehydrogenase /sirohydrochlorin ferrochelatase region. Residues 22-23 (EV) and 43-44 (CE) contribute to the NAD(+) site. Ser-128 carries the phosphoserine modification. The interval 216-472 (GEVVLVGAGP…GMKEQVERVG (257 aa)) is uroporphyrinogen-III C-methyltransferase. Pro-225 is a binding site for S-adenosyl-L-methionine. Catalysis depends on Asp-248, which acts as the Proton acceptor. Residue Lys-270 is the Proton donor of the active site. S-adenosyl-L-methionine contacts are provided by residues 301–303 (GGD), Ile-306, 331–332 (TA), Met-382, and Gly-411.

This sequence in the N-terminal section; belongs to the precorrin-2 dehydrogenase / sirohydrochlorin ferrochelatase family. The protein in the C-terminal section; belongs to the precorrin methyltransferase family.

The enzyme catalyses uroporphyrinogen III + 2 S-adenosyl-L-methionine = precorrin-2 + 2 S-adenosyl-L-homocysteine + H(+). It carries out the reaction precorrin-2 + NAD(+) = sirohydrochlorin + NADH + 2 H(+). The catalysed reaction is siroheme + 2 H(+) = sirohydrochlorin + Fe(2+). It participates in cofactor biosynthesis; adenosylcobalamin biosynthesis; precorrin-2 from uroporphyrinogen III: step 1/1. It functions in the pathway cofactor biosynthesis; adenosylcobalamin biosynthesis; sirohydrochlorin from precorrin-2: step 1/1. The protein operates within porphyrin-containing compound metabolism; siroheme biosynthesis; precorrin-2 from uroporphyrinogen III: step 1/1. Its pathway is porphyrin-containing compound metabolism; siroheme biosynthesis; siroheme from sirohydrochlorin: step 1/1. It participates in porphyrin-containing compound metabolism; siroheme biosynthesis; sirohydrochlorin from precorrin-2: step 1/1. Functionally, multifunctional enzyme that catalyzes the SAM-dependent methylations of uroporphyrinogen III at position C-2 and C-7 to form precorrin-2 via precorrin-1. Then it catalyzes the NAD-dependent ring dehydrogenation of precorrin-2 to yield sirohydrochlorin. Finally, it catalyzes the ferrochelation of sirohydrochlorin to yield siroheme. The polypeptide is Siroheme synthase 2 (Yersinia enterocolitica serotype O:8 / biotype 1B (strain NCTC 13174 / 8081)).